Reading from the N-terminus, the 117-residue chain is MEIGVDIVEIARIRSSYDRFGEAFMKKILTSAEMAQCLSKPDPVASLAGRFAAKEAVSKALGTGIAKGLTWHSIEVLNDETGKPCVSVYAPSFSGRVSISISHDRYSAVAMALFEPR.

Mg(2+) is bound by residues Asp-6 and Glu-55.

This sequence belongs to the P-Pant transferase superfamily. AcpS family. The cofactor is Mg(2+).

It localises to the cytoplasm. The enzyme catalyses apo-[ACP] + CoA = holo-[ACP] + adenosine 3',5'-bisphosphate + H(+). Transfers the 4'-phosphopantetheine moiety from coenzyme A to a Ser of acyl-carrier-protein. This Chlorobaculum tepidum (strain ATCC 49652 / DSM 12025 / NBRC 103806 / TLS) (Chlorobium tepidum) protein is Holo-[acyl-carrier-protein] synthase.